Here is a 107-residue protein sequence, read N- to C-terminus: Putative ankyrin repeat protein RP714 (107 aa).

ANK repeat units follow at residues 7 to 36 (PPLSPLIIAVLNGNIEYTSELLQNGVDIDV), 40 to 69 (NGNSALHIAASKGYTKIATMLLLYGATIDA), and 73 to 102 (ELATPLHYAAANNYKDLTQYLLNMNANKSA).

The polypeptide is Putative ankyrin repeat protein RP714 (Rickettsia prowazekii (strain Madrid E)).